Reading from the N-terminus, the 150-residue chain is Flagellar assembly factor FliW (150 aa).

Belongs to the FliW family. Interacts with translational regulator CsrA and flagellin(s).

Its subcellular location is the cytoplasm. In terms of biological role, acts as an anti-CsrA protein, binds CsrA and prevents it from repressing translation of its target genes, one of which is flagellin. Binds to flagellin and participates in the assembly of the flagellum. This Leptospira interrogans serogroup Icterohaemorrhagiae serovar copenhageni (strain Fiocruz L1-130) protein is Flagellar assembly factor FliW.